The following is a 59-amino-acid chain: MGLADRIKKLREDWKRIISVAKKPDKSMFYLNLRVTLIVLLFVGLLAFLVQLAFSILLG.

Residues 37-57 (LIVLLFVGLLAFLVQLAFSIL) form a helical membrane-spanning segment.

Belongs to the SecE/SEC61-gamma family. As to quaternary structure, component of the Sec protein translocase complex. Heterotrimer consisting of SecY (alpha), SecG (beta) and SecE (gamma) subunits. The heterotrimers can form oligomers, although 1 heterotrimer is thought to be able to translocate proteins. Interacts with the ribosome. May interact with SecDF, and other proteins may be involved.

The protein resides in the cell membrane. Functionally, essential subunit of the Sec protein translocation channel SecYEG. Clamps together the 2 halves of SecY. May contact the channel plug during translocation. This is Protein translocase subunit SecE from Metallosphaera sedula (strain ATCC 51363 / DSM 5348 / JCM 9185 / NBRC 15509 / TH2).